The primary structure comprises 129 residues: Lysozyme C (129 aa).

The region spanning 1 to 129 (KVYGRCELAA…VNAWTRGCRL (129 aa)) is the C-type lysozyme domain. 4 cysteine pairs are disulfide-bonded: cysteine 6–cysteine 127, cysteine 30–cysteine 115, cysteine 64–cysteine 80, and cysteine 76–cysteine 94. Active-site residues include glutamate 35 and aspartate 52.

The protein belongs to the glycosyl hydrolase 22 family. As to quaternary structure, monomer.

It localises to the secreted. It catalyses the reaction Hydrolysis of (1-&gt;4)-beta-linkages between N-acetylmuramic acid and N-acetyl-D-glucosamine residues in a peptidoglycan and between N-acetyl-D-glucosamine residues in chitodextrins.. In terms of biological role, lysozymes have primarily a bacteriolytic function; those in tissues and body fluids are associated with the monocyte-macrophage system and enhance the activity of immunoagents. This is Lysozyme C (LYZ) from Syrmaticus soemmerringii (Copper pheasant).